A 172-amino-acid chain; its full sequence is Shikimate kinase (172 aa).

14 to 19 contributes to the ATP binding site; the sequence is GAGKST. Mg(2+) is bound at residue serine 18. The substrate site is built by aspartate 36, arginine 60, and glycine 82. An ATP-binding site is contributed by arginine 120. Arginine 139 contributes to the substrate binding site. Residue glutamine 156 participates in ATP binding.

Belongs to the shikimate kinase family. As to quaternary structure, monomer. Mg(2+) serves as cofactor.

The protein resides in the cytoplasm. It catalyses the reaction shikimate + ATP = 3-phosphoshikimate + ADP + H(+). It functions in the pathway metabolic intermediate biosynthesis; chorismate biosynthesis; chorismate from D-erythrose 4-phosphate and phosphoenolpyruvate: step 5/7. Its function is as follows. Catalyzes the specific phosphorylation of the 3-hydroxyl group of shikimic acid using ATP as a cosubstrate. The protein is Shikimate kinase of Vibrio campbellii (strain ATCC BAA-1116).